A 117-amino-acid polypeptide reads, in one-letter code: G antigen 12I (117 aa).

The interval 1-117 (MSWRGRSTYY…PEEGEKQSQC (117 aa)) is disordered. Acidic residues-rich tracts occupy residues 32–45 (FSDE…EEGE) and 87–96 (ECEDGPDGQE). Residues 103 to 117 (EEVKTPEEGEKQSQC) are compositionally biased toward basic and acidic residues.

The protein belongs to the GAGE family. Forms tetramers.

The protein is G antigen 12I (GAGE12I) of Homo sapiens (Human).